A 298-amino-acid polypeptide reads, in one-letter code: Zinc import ATP-binding protein ZnuC (298 aa).

Residues 17 to 232 enclose the ABC transporter domain; the sequence is IELRNAGVYR…PEYVRLFGSR (216 aa). 49-56 serves as a coordination point for ATP; sequence GPNGAGKS. A disordered region spans residues 273 to 298; that stretch reads RGHCHVEDGHHHDHEHHHHEGGQPRA. Residues 276–298 are compositionally biased toward basic and acidic residues; that stretch reads CHVEDGHHHDHEHHHHEGGQPRA.

It belongs to the ABC transporter superfamily. Zinc importer (TC 3.A.1.15.5) family. In terms of assembly, the complex is composed of two ATP-binding proteins (ZnuC), two transmembrane proteins (ZnuB) and a solute-binding protein (ZnuA).

Its subcellular location is the cell inner membrane. It catalyses the reaction Zn(2+)(out) + ATP(in) + H2O(in) = Zn(2+)(in) + ADP(in) + phosphate(in) + H(+)(in). Part of the ABC transporter complex ZnuABC involved in zinc import. Responsible for energy coupling to the transport system. The protein is Zinc import ATP-binding protein ZnuC of Brucella suis biovar 1 (strain 1330).